The chain runs to 120 residues: UPF0342 protein LAF_1331 (120 aa).

The protein belongs to the UPF0342 family.

This chain is UPF0342 protein LAF_1331, found in Limosilactobacillus fermentum (strain NBRC 3956 / LMG 18251) (Lactobacillus fermentum).